The following is a 40-amino-acid chain: Photosystem II reaction center protein Y (40 aa).

A helical membrane pass occupies residues 4 to 22; sequence LLVITLPILAAIGWVTLNI.

Belongs to the PsbY family. PSII is composed of 1 copy each of membrane proteins PsbA, PsbB, PsbC, PsbD, PsbE, PsbF, PsbH, PsbI, PsbJ, PsbK, PsbL, PsbM, PsbT, PsbX, PsbY, Psb30/Ycf12, peripheral proteins PsbO, CyanoQ (PsbQ), PsbU, PsbV and a large number of cofactors. It forms dimeric complexes.

The protein localises to the cellular thylakoid membrane. In terms of biological role, loosely associated component of the core of photosystem II (PSII), it is not always seen in crystals. PSII is a light-driven water plastoquinone oxidoreductase, using light energy to abstract electrons from H(2)O, generating a proton gradient subsequently used for ATP formation. The sequence is that of Photosystem II reaction center protein Y from Prochlorococcus marinus (strain SARG / CCMP1375 / SS120).